Reading from the N-terminus, the 426-residue chain is MSKSENLYSAARELLPGGVNSPVRAFTGVGGTPLFIEKADGAYLYDVDGKAYIDYVGSWGPMVLGHNHPAIRNAVIEAAERGLSFGAPTEMEVKMAQLVTELVPTMDMVRMVNSGTEATMSAIRLARGFTGRDKIIKFEGCYHGHADCLLVKAGSGALTLGQPNSPGVPADFAKHTLTCTYNDLASVRAAFEQYPQEIACIIVEPVAGNMNCVPPQPEFLPGLRALCDEFGALLIIDEVMTGFRVALAGAQDYYGVVPDLTCLGKIIGGGMPVGAFGGRRDVMDALAPTGPVYQAGTLSGNPIAMAAGFACLNEVAQPGVHETLDELTTRLAEGLLEAAEEAGTPLVVNHVGGMFGIFFTDAESVTCYQDVMACDVERFKRFFHMMLDEGVYLAPSAFEAGFMSVAHSMEDINNTIDAARRVFAKL.

K265 carries the post-translational modification N6-(pyridoxal phosphate)lysine.

Belongs to the class-III pyridoxal-phosphate-dependent aminotransferase family. HemL subfamily. In terms of assembly, homodimer. Pyridoxal 5'-phosphate is required as a cofactor.

The protein localises to the cytoplasm. It carries out the reaction (S)-4-amino-5-oxopentanoate = 5-aminolevulinate. The protein operates within porphyrin-containing compound metabolism; protoporphyrin-IX biosynthesis; 5-aminolevulinate from L-glutamyl-tRNA(Glu): step 2/2. The protein is Glutamate-1-semialdehyde 2,1-aminomutase of Shigella boydii serotype 4 (strain Sb227).